The chain runs to 172 residues: Adenine phosphoribosyltransferase (172 aa).

This sequence belongs to the purine/pyrimidine phosphoribosyltransferase family. Homodimer.

Its subcellular location is the cytoplasm. The catalysed reaction is AMP + diphosphate = 5-phospho-alpha-D-ribose 1-diphosphate + adenine. The protein operates within purine metabolism; AMP biosynthesis via salvage pathway; AMP from adenine: step 1/1. Functionally, catalyzes a salvage reaction resulting in the formation of AMP, that is energically less costly than de novo synthesis. The polypeptide is Adenine phosphoribosyltransferase (Staphylococcus haemolyticus (strain JCSC1435)).